Consider the following 231-residue polypeptide: 5'-methylthioadenosine/S-adenosylhomocysteine nucleosidase (231 aa).

The Proton acceptor role is filled by Glu12. Residues Gly78, Val153, and 174-175 (ME) each bind substrate. The active-site Proton donor is Asp198.

It belongs to the PNP/UDP phosphorylase family. MtnN subfamily.

It catalyses the reaction S-adenosyl-L-homocysteine + H2O = S-(5-deoxy-D-ribos-5-yl)-L-homocysteine + adenine. The enzyme catalyses S-methyl-5'-thioadenosine + H2O = 5-(methylsulfanyl)-D-ribose + adenine. It carries out the reaction 5'-deoxyadenosine + H2O = 5-deoxy-D-ribose + adenine. It functions in the pathway amino-acid biosynthesis; L-methionine biosynthesis via salvage pathway; S-methyl-5-thio-alpha-D-ribose 1-phosphate from S-methyl-5'-thioadenosine (hydrolase route): step 1/2. Its function is as follows. Catalyzes the irreversible cleavage of the glycosidic bond in both 5'-methylthioadenosine (MTA) and S-adenosylhomocysteine (SAH/AdoHcy) to adenine and the corresponding thioribose, 5'-methylthioribose and S-ribosylhomocysteine, respectively. Also cleaves 5'-deoxyadenosine, a toxic by-product of radical S-adenosylmethionine (SAM) enzymes, into 5-deoxyribose and adenine. The polypeptide is 5'-methylthioadenosine/S-adenosylhomocysteine nucleosidase (Vibrio campbellii (strain ATCC BAA-1116)).